The primary structure comprises 274 residues: Ribosomal RNA small subunit methyltransferase A (274 aa).

Positions 28, 30, 55, 77, 103, and 122 each coordinate S-adenosyl-L-methionine.

Belongs to the class I-like SAM-binding methyltransferase superfamily. rRNA adenine N(6)-methyltransferase family. RsmA subfamily.

The protein localises to the cytoplasm. It carries out the reaction adenosine(1518)/adenosine(1519) in 16S rRNA + 4 S-adenosyl-L-methionine = N(6)-dimethyladenosine(1518)/N(6)-dimethyladenosine(1519) in 16S rRNA + 4 S-adenosyl-L-homocysteine + 4 H(+). Its function is as follows. Specifically dimethylates two adjacent adenosines (A1518 and A1519) in the loop of a conserved hairpin near the 3'-end of 16S rRNA in the 30S particle. May play a critical role in biogenesis of 30S subunits. This Sinorhizobium medicae (strain WSM419) (Ensifer medicae) protein is Ribosomal RNA small subunit methyltransferase A.